Here is a 539-residue protein sequence, read N- to C-terminus: G protein-coupled receptor associated sorting protein 3 (539 aa).

The span at Met1 to Ala10 shows a compositional bias: basic residues. 2 disordered regions span residues Met1–Trp112 and Val134–Val172. Basic and acidic residues-rich tracts occupy residues Val66–Ala80 and Phe88–Ser106. Over residues Val134–Gln146 the composition is skewed to polar residues.

The protein belongs to the GPRASP family. In terms of assembly, homodimer.

Its subcellular location is the cytoplasm. It is found in the nucleus. Survival and differentiation promoting protein that plays a role in the regulation of neurosynaptogenesis. Induces phosphatase PP2A activity which results in APP dephosphorylation and inhibits BACE1-mediated processing of APP. The chain is G protein-coupled receptor associated sorting protein 3 (Gprasp3) from Mus musculus (Mouse).